The chain runs to 251 residues: Small ribosomal subunit protein uS2 (251 aa).

This sequence belongs to the universal ribosomal protein uS2 family.

In Arthrospira platensis (Spirulina platensis), this protein is Small ribosomal subunit protein uS2 (rpsB).